The sequence spans 71 residues: DNA-directed RNA polymerase subunit epsilon (71 aa).

The protein belongs to the RNA polymerase subunit epsilon family. In terms of assembly, RNAP is composed of a core of 2 alpha, a beta and a beta' subunit. The core is associated with a delta subunit, and at least one of epsilon or omega. When a sigma factor is associated with the core the holoenzyme is formed, which can initiate transcription.

It carries out the reaction RNA(n) + a ribonucleoside 5'-triphosphate = RNA(n+1) + diphosphate. Functionally, a non-essential component of RNA polymerase (RNAP). The polypeptide is DNA-directed RNA polymerase subunit epsilon (Staphylococcus carnosus (strain TM300)).